Here is a 299-residue protein sequence, read N- to C-terminus: CRISPR system Cms protein Csm4 (299 aa).

Belongs to the CRISPR-associated Csm4 family. As to quaternary structure, part of the Csm effector complex that includes at least Cas10(1), Csm2(3), Csm3(5), Csm4(1), Csm5(1) and mature crRNA. The Csm complex is elongated and slightly twisted with a maximal length of 215 Angstroms and a diameter of 75-80 Angstroms. It has been modeled to have a central protein filamant of Csm3 subunits along which the dsRNA helix of paired crRNA and target RNA binds. The filament is capped at one end by Cas10 and Csm4 and at the other end by Csm5; ssDNA is thought to bind to the N-terminal HD domain of Cas10. Csm with a precursor crRNA does not include Csm5, while Cas6, the enzyme probably involved in pre-crRNA processing, is found associated with a subset of the Csm complex.

CRISPR (clustered regularly interspaced short palindromic repeat) is an adaptive immune system that provides protection against mobile genetic elements (viruses, transposable elements and conjugative plasmids). CRISPR clusters contain spacers, sequences complementary to antecedent mobile elements, and target invading nucleic acids. CRISPR clusters are transcribed and processed into CRISPR RNA (crRNA). The type III-A Csm effector complex binds crRNA and acts as a crRNA-guided RNase, DNase and cyclic oligoadenylate synthase; binding of target RNA cognate to the crRNA is required for all activities. In a heterologous host this Csm effector complex restricts ssRNA phage MS2, suggesting it may target RNA viruses in vivo. In terms of biological role, csm functions as a non-specific ssDNase. Base-pairing between crRNA and target RNA to form a ternary Csm complex activates a ssDNase activity; target RNA cleavage suppresses the ssDNase, a temporal control that prevents uncontrolled DNA degradation. Viral RNA transcripts probably tether the Csm complex to the viral genome, recruiting Cas10 ssDNA activity which is able to degrade DNA in the transcription bubble, spatially controlling the DNase activity. Its function is as follows. The subunit probably binds to the 5' handle of the crRNA, helping in discrimination between self- and non-self. This is CRISPR system Cms protein Csm4 from Streptococcus thermophilus.